A 635-amino-acid chain; its full sequence is tRNA uridine 5-carboxymethylaminomethyl modification enzyme MnmG (635 aa).

15 to 20 (GAGHAG) contacts FAD. 276–290 (GPRYCPSIEDKIVRF) contributes to the NAD(+) binding site.

This sequence belongs to the MnmG family. Homodimer. Heterotetramer of two MnmE and two MnmG subunits. It depends on FAD as a cofactor.

Its subcellular location is the cytoplasm. NAD-binding protein involved in the addition of a carboxymethylaminomethyl (cmnm) group at the wobble position (U34) of certain tRNAs, forming tRNA-cmnm(5)s(2)U34. The chain is tRNA uridine 5-carboxymethylaminomethyl modification enzyme MnmG from Streptococcus sanguinis (strain SK36).